A 549-amino-acid chain; its full sequence is Teichoic acids export ATP-binding protein TagH (549 aa).

The region spanning 22 to 243 is the ABC transporter domain; sequence DKLKDLFRKQ…YRAFLKEYNQ (222 aa). 57-64 serves as a coordination point for ATP; sequence GLNGSGKS. Residues 244-549 form a unknown region; that stretch reads MSMEDRKKFQ…EIQSISIVKK (306 aa). One can recognise an SH3b domain in the interval 346–415; that stretch reads ENMYMVKSNG…VSTKFIEPFK (70 aa).

Belongs to the ABC transporter superfamily. Teichoic acids exporter (TC 3.A.1.104.1) family. The complex is composed of two ATP-binding proteins (TagH) and two transmembrane proteins (TagG).

The protein localises to the cell membrane. It carries out the reaction ATP + H2O + teichoic acidSide 1 = ADP + phosphate + teichoic acidSide 2.. Its function is as follows. Part of the ABC transporter complex TagGH involved in teichoic acids export. Responsible for energy coupling to the transport system. The chain is Teichoic acids export ATP-binding protein TagH from Bacillus cereus (strain ZK / E33L).